Here is a 336-residue protein sequence, read N- to C-terminus: MFDLSRLSRGIVPMALLLLGISACTPSQTSQSIAINGSSTVYPITEAIVADFSGGKKGVDIDVEFSGTGGGFKLFCEGKTDIADASRPINKQEMKLCNDNQVRYVELPIAFDAITVVSNPKNDWLKSLTVEELKRIWEPAAEKTLTRWNQVRPEFPDQPINLYSPGEDSGTFDYFTEAIVGQAGASRLDTLKSEDDEILVQGVVQDLYSLGYFGFAYYEGRIADLKAIGVDNGRGPVLPSRETVEKSEYQPLSRPLFIYVNATKAQDNPALREFVDFYLANASATATKVGYIPLPEEAYNLGKISFNKGEVGTVFGGESVMDLTIGELLKKQASFE.

The signal sequence occupies residues 1-27 (MFDLSRLSRGIVPMALLLLGISACTPS).

The protein belongs to the PstS family.

In terms of biological role, may be involved in the system for phosphate transport across the cytoplasmic membrane. This chain is Protein SphX (sphX), found in Synechocystis sp. (strain ATCC 27184 / PCC 6803 / Kazusa).